Here is a 449-residue protein sequence, read N- to C-terminus: Ras-related GTP-binding protein D (449 aa).

The segment at 1-55 is disordered; that stretch reads MSQVLGKPQPQGEDGGEDQEEDELVGLAGYEDGPESSDAELDSGPEEGESRRNSW. Composition is skewed to acidic residues over residues 14 to 24 and 32 to 47; these read DGGEDQEEDEL and DGPESSDAELDSGPEE. Residues R120, R121, S122, G123, K124, S125, S126, and T140 each coordinate GTP. R121, S122, G123, K124, S125, S126, T140, E144, and T146 together coordinate GDP. 5 residues coordinate GTP: T146, G169, H228, K229, and D231. GDP contacts are provided by H228, K229, D231, S269, and I270. A GTP-binding site is contributed by I270. Residues 428 to 449 form a disordered region; sequence KAQSRLPKKTGATPNGTPRVLL.

It belongs to the GTR/RAG GTP-binding protein family. As to quaternary structure, forms a heterodimer with RRAGA in a sequence-independent manner and RRAGB. Heterodimerization stabilizes RRAG proteins. The GDP-bound form of RRAGD (in complex with the GTP-bound form of RRAGA or RRAGB), interacts with RPTOR, thereby promoting recruitment of mTORC1 to the lysosomes. Component of the lysosomal folliculin complex (LFC), composed of FLCN, FNIP1 (or FNIP2), RagA/RRAGA or RagB/RRAGB GDP-bound, RagC/RRAGC or RagD/RRAGD GTP-bound, and Ragulator. Interacts with NOL8. Interacts with SH3BP4; the interaction with this negative regulator is most probably direct, preferentially occurs with the inactive GDP-bound form of RRAGD and is negatively regulated by amino acids. The Rag heterodimer interacts with SLC38A9; the probable amino acid sensor. Interacts with SESN1, SESN2 and SESN3. The GDP-bound form interacts with TFEB. The GDP-bound form interacts with TFE3. In terms of tissue distribution, expressed in the distal tubule of the kidney.

The protein resides in the cytoplasm. The protein localises to the nucleus. It localises to the lysosome membrane. The catalysed reaction is GTP + H2O = GDP + phosphate + H(+). With respect to regulation, the activation of RagD/RRAGD is mediated by a GTPase activating protein (GAP). In high-amino acid conditions, activated by GTPase activating protein FLCN that stimulates RRAGD GTPase activity to turn it into its active GDP-bound form. In response to amino acid depletion, the GATOR1 complex inactivates RagC/RRAGC by securing the GTP-bound inactive form. Guanine nucleotide-binding protein that plays a crucial role in the cellular response to amino acid availability through regulation of the mTORC1 signaling cascade. Forms heterodimeric Rag complexes with RagA/RRAGA or RagB/RRAGB and cycles between an inactive GTP-bound and an active GDP-bound form: RagD/RRAGD is in its active form when GDP-bound RagD/RRAGD forms a complex with GTP-bound RagA/RRAGA (or RagB/RRAGB) and in an inactive form when GTP-bound RagD/RRAGD heterodimerizes with GDP-bound RagA/RRAGA (or RagB/RRAGB). In its active form, promotes the recruitment of mTORC1 to the lysosomes and its subsequent activation by the GTPase RHEB. This is a crucial step in the activation of the MTOR signaling cascade by amino acids. Also plays a central role in the non-canonical mTORC1 complex, which acts independently of RHEB and specifically mediates phosphorylation of MiT/TFE factors TFEB and TFE3: GDP-bound RagD/RRAGD mediates recruitment of MiT/TFE factors TFEB and TFE3. This Mus musculus (Mouse) protein is Ras-related GTP-binding protein D.